The sequence spans 526 residues: GMP synthase [glutamine-hydrolyzing] (526 aa).

A Glutamine amidotransferase type-1 domain is found at 10-208 (RILILDFGSQ…VVDLCGCEKL (199 aa)). The Nucleophile role is filled by Cys87. Residues His182 and Glu184 contribute to the active site. Residues 209-401 (WTTENIIDDS…LGLPSDMVYR (193 aa)) enclose the GMPS ATP-PPase domain. 236-242 (SGGVDSS) contacts ATP.

In terms of assembly, homodimer.

It catalyses the reaction XMP + L-glutamine + ATP + H2O = GMP + L-glutamate + AMP + diphosphate + 2 H(+). It participates in purine metabolism; GMP biosynthesis; GMP from XMP (L-Gln route): step 1/1. Functionally, catalyzes the synthesis of GMP from XMP. The sequence is that of GMP synthase [glutamine-hydrolyzing] from Hydrogenovibrio crunogenus (strain DSM 25203 / XCL-2) (Thiomicrospira crunogena).